The sequence spans 243 residues: Type III pantothenate kinase (243 aa).

6–13 is a binding site for ATP; sequence DIGNTVAK. Substrate is bound by residues Y86 and 93-96; that span reads GYDR. D95 acts as the Proton acceptor in catalysis. Residue D116 participates in K(+) binding. T119 lines the ATP pocket. Substrate is bound at residue T171.

It belongs to the type III pantothenate kinase family. Homodimer. It depends on NH4(+) as a cofactor. The cofactor is K(+).

Its subcellular location is the cytoplasm. The catalysed reaction is (R)-pantothenate + ATP = (R)-4'-phosphopantothenate + ADP + H(+). Its pathway is cofactor biosynthesis; coenzyme A biosynthesis; CoA from (R)-pantothenate: step 1/5. In terms of biological role, catalyzes the phosphorylation of pantothenate (Pan), the first step in CoA biosynthesis. This Bacteroides fragilis (strain YCH46) protein is Type III pantothenate kinase.